Reading from the N-terminus, the 697-residue chain is Transmembrane protein 168 (697 aa).

3 helical membrane-spanning segments follow: residues 36-56 (LGYL…YVRW), 63-83 (LILV…ILYY), and 89-109 (AASL…LCFL). Residue Asn111 is glycosylated (N-linked (GlcNAc...) asparagine). Helical transmembrane passes span 172–192 (MLVE…MLII), 199–219 (FLAI…SLET), 223–243 (PIAF…DIYF), 265–285 (LSVL…AFKL), and 293–313 (FVIP…IIFL). N-linked (GlcNAc...) asparagine glycosylation occurs at Asn337. 2 consecutive transmembrane segments (helical) span residues 352-372 (FCLI…ILGA) and 380-400 (GIFL…HGLF). N-linked (GlcNAc...) asparagine glycans are attached at residues Asn533 and Asn598.

This sequence belongs to the TMEM168 family.

Its subcellular location is the nucleus membrane. Functionally, plays a key role in maintaining the cardiac electrical stability by modulating cell surface expression of SCN5A. Plays a role i the modulation of anxiety behavior by regulating GABAergic neuronal system in the nucleus accumbens. This chain is Transmembrane protein 168 (Tmem168), found in Mus musculus (Mouse).